An 80-amino-acid chain; its full sequence is MKRILIAPVRFYQRFISPVFPPSCRFELTCSNYMIQAIEKHGFKGVLMGLARILRCHPWSKTGKDPVPDRFSLKRNQEGE.

The segment at 60–80 (SKTGKDPVPDRFSLKRNQEGE) is disordered. The span at 62–80 (TGKDPVPDRFSLKRNQEGE) shows a compositional bias: basic and acidic residues.

It belongs to the UPF0161 family.

It is found in the cell membrane. In terms of biological role, could be involved in insertion of integral membrane proteins into the membrane. The chain is Putative membrane protein insertion efficiency factor from Streptococcus pneumoniae serotype 4 (strain ATCC BAA-334 / TIGR4).